A 563-amino-acid polypeptide reads, in one-letter code: Alpha-humulene synthase (563 aa).

4 residues coordinate Mg(2+): aspartate 316, aspartate 320, aspartate 461, and glutamate 469. The short motif at 316–320 (DDIYD) is the DDXXD motif element.

This sequence belongs to the terpene synthase family. Tpsa subfamily. Mg(2+) is required as a cofactor. Requires Mn(2+) as cofactor. As to expression, expressed in trichomes, cones and young leaves.

The catalysed reaction is (2E,6E)-farnesyl diphosphate = alpha-humulene + diphosphate. It functions in the pathway sesquiterpene biosynthesis. It participates in secondary metabolite biosynthesis; terpenoid biosynthesis. Sesquiterpene synthase that catalyzes the formation of alpha-humulene. Can use farnesyl diphosphate (FPP) as substrate, but not geranyl diphosphate (GPP) or geranylgeranyl diphosphate (GGPP). The chain is Alpha-humulene synthase from Humulus lupulus (European hop).